The following is a 159-amino-acid chain: MPKFYCDYCDTYLTHDSPSVRKTHCSGRKHKENVKDYYQKWMEEQAQSLIDKTTAAFQQGKIPPTPFSAPPPAGAMIPPPPSLPGPPRPGMMPAPHMGGPPMMPMMGPPPPGMMPVGPAPGMRPPMGGHMPMMPGPPMMRPPARPMMVPTRPGMTRPDR.

The Matrin-type zinc finger occupies 4–36; it reads FYCDYCDTYLTHDSPSVRKTHCSGRKHKENVKD. Tyrosine 8 carries the post-translational modification Phosphotyrosine. The residue at position 17 (serine 17) is a Phosphoserine. At lysine 52 the chain carries N6-acetyllysine. Disordered regions lie at residues 62–96 and 140–159; these read IPPTPFSAPPPAGAMIPPPPSLPGPPRPGMMPAPH and RPPARPMMVPTRPGMTRPDR. Residues 63–92 show a composition bias toward pro residues; sequence PPTPFSAPPPAGAMIPPPPSLPGPPRPGMM.

This sequence belongs to the U1 small nuclear ribonucleoprotein C family. Component of the U1 snRNP. The U1 snRNP is composed of the U1 snRNA and the 7 core Sm proteins SNRPB, SNRPD1, SNRPD2, SNRPD3, SNRPE, SNRPF and SNRPG that assemble in a heptameric protein ring on the Sm site of the small nuclear RNA to form the core snRNP, and at least 3 U1 snRNP-specific proteins SNRNP70/U1-70K, SNRPA/U1-A and SNRPC/U1-C. SNRPC/U1-C interacts with U1 snRNA and the 5' splice-site region of the pre-mRNA. Interacts (via N-terminus) with TIA1 (via C-terminus); thereby promoting spliceosomal U1 snRNP recruitment to 5' splice sites.

It localises to the nucleus. Functionally, component of the spliceosomal U1 snRNP, which is essential for recognition of the pre-mRNA 5' splice-site and the subsequent assembly of the spliceosome. SNRPC/U1-C is directly involved in initial 5' splice-site recognition for both constitutive and regulated alternative splicing. The interaction with the 5' splice-site seems to precede base-pairing between the pre-mRNA and the U1 snRNA. Stimulates commitment or early (E) complex formation by stabilizing the base pairing of the 5' end of the U1 snRNA and the 5' splice-site region. In Homo sapiens (Human), this protein is U1 small nuclear ribonucleoprotein C.